A 306-amino-acid chain; its full sequence is Aspartate carbamoyltransferase catalytic subunit (306 aa).

Carbamoyl phosphate-binding residues include R54 and T55. K83 contacts L-aspartate. Carbamoyl phosphate-binding residues include R104, H132, and Q135. L-aspartate-binding residues include R165 and R227. 2 residues coordinate carbamoyl phosphate: L266 and P267.

The protein belongs to the aspartate/ornithine carbamoyltransferase superfamily. ATCase family. As to quaternary structure, heterododecamer (2C3:3R2) of six catalytic PyrB chains organized as two trimers (C3), and six regulatory PyrI chains organized as three dimers (R2).

The enzyme catalyses carbamoyl phosphate + L-aspartate = N-carbamoyl-L-aspartate + phosphate + H(+). It functions in the pathway pyrimidine metabolism; UMP biosynthesis via de novo pathway; (S)-dihydroorotate from bicarbonate: step 2/3. Functionally, catalyzes the condensation of carbamoyl phosphate and aspartate to form carbamoyl aspartate and inorganic phosphate, the committed step in the de novo pyrimidine nucleotide biosynthesis pathway. This chain is Aspartate carbamoyltransferase catalytic subunit, found in Clostridium novyi (strain NT).